The primary structure comprises 559 residues: MPPKKAAPKKLHELAPEVRVGLKIDDISKKTYIVGKQFATGGFGRIHTCTEDGKSQQMVMKIEPSTNGPLLTEVVVFNRILKKDMIENYKKAKKIQWIGLPHLIANGYFTYNNEKMRYMIIPKYATSLEAVREANGGSLSAKDSLTVADCVLGALEYLHDSDYAHADVKAANILLEKPNDFSSAVLVDFGLAHRTTNNVDKPDKKRAHNGTCIFTSTDAHRGNNPSFRGDVEILAYNLIMWISGSLPWLSLEASPDKVFEAKQKFVGGLPGTLQSILTNQPAPVAGCITTMFDVSRKTDYTHKVDMAKLRKKVTEAAQSASTGAQKKPKMTPSRDTTATPKRKSQRAPRVESEDEEEEEKKEVEIKPKKKVQRSRKVVEDDDEEEEVIIPKSTRSRKTKEEGTPRSFNLGMTSSTATSDRVAKKIEMKYKRLATNKPSLVPVTVADASSCESQYESNEPGPSSRVVKKRTSEERDANGEVQLKTPALVSPDVKKTKYKSGISSATKASPTELRRVPGVRNFPKGRRSMIIKETSARYQEKRATRNTKPTFDDSSCSSEV.

In terms of domain architecture, Protein kinase spans 32 to 388 (YIVGKQFATG…EDDDEEEEVI (357 aa)). ATP-binding positions include 38 to 46 (FATGGFGRI) and Lys61. Asp167 serves as the catalytic Proton acceptor. 2 disordered regions span residues 315-419 (EAAQ…ATSD) and 448-559 (SSCE…SSEV). Composition is skewed to polar residues over residues 405-418 (RSFN…TATS) and 449-460 (SCESQYESNEPG). Over residues 533 to 542 (TSARYQEKRA) the composition is skewed to basic and acidic residues. Residues 545-559 (NTKPTFDDSSCSSEV) are compositionally biased toward polar residues.

It belongs to the protein kinase superfamily. CK1 Ser/Thr protein kinase family. VRK subfamily. In terms of processing, autophosphorylates in vitro.

Its subcellular location is the nucleus. It is found in the cytoplasm. It localises to the cajal body. The catalysed reaction is L-seryl-[protein] + ATP = O-phospho-L-seryl-[protein] + ADP + H(+). It catalyses the reaction L-threonyl-[protein] + ATP = O-phospho-L-threonyl-[protein] + ADP + H(+). Functionally, serine/threonine kinase that phosphorylates baf-1, thus regulating the association of baf-1 with chromatin and nuclear membrane proteins during nuclear envelope formation. May act through the egl-17 signaling pathway. Essential in hermaphrodites for formation of the vulva, uterus, and uterine seam cells and for development and maintenance of the somatic gonad and thus the germ line. Acts to prevent cep-1 from triggering an inappropriate cell cycle arrest, thereby promoting germ cell proliferation. Regulates anchor cell polarity and the timing of anchor cell invasion through the basement membranes separating vulval and somatic gonadal cells during the L3 larval stage. The sequence is that of Serine/threonine-protein kinase VRK1 from Caenorhabditis briggsae.